The chain runs to 334 residues: Protein RecA (334 aa).

Position 65–72 (65–72) interacts with ATP; it reads GNESSGKT.

It belongs to the RecA family.

Its subcellular location is the cytoplasm. In terms of biological role, can catalyze the hydrolysis of ATP in the presence of single-stranded DNA, the ATP-dependent uptake of single-stranded DNA by duplex DNA, and the ATP-dependent hybridization of homologous single-stranded DNAs. It interacts with LexA causing its activation and leading to its autocatalytic cleavage. The sequence is that of Protein RecA from Ureaplasma parvum serovar 3 (strain ATCC 27815 / 27 / NCTC 11736).